The sequence spans 198 residues: Superoxide dismutase [Mn], mitochondrial (198 aa).

His26 provides a ligand contact to Mn(2+). Tyr34 is subject to 3'-nitrotyrosine. N6-acetyllysine; alternate occurs at positions 44 and 51. N6-succinyllysine; alternate occurs at positions 44 and 51. A Mn(2+)-binding site is contributed by His74. Lys90 is modified (N6-acetyllysine). An N6-acetyllysine; alternate mark is found at Lys98 and Lys106. Residues Lys98 and Lys106 each carry the N6-succinyllysine; alternate modification. Residues Asp159 and His163 each coordinate Mn(2+). Lys178 carries the post-translational modification N6-acetyllysine.

Belongs to the iron/manganese superoxide dismutase family. As to quaternary structure, homotetramer. Mn(2+) serves as cofactor. Post-translationally, nitrated under oxidative stress. Nitration coupled with oxidation inhibits the catalytic activity. In terms of processing, acetylation at Lys-98 decreases enzymatic activity. Deacetylated by SIRT3 upon exposure to ionizing radiations or after long fasting. Polyubiquitinated; leading to proteasomal degradation. Deubiquitinated by USP36 which increases protein stability.

Its subcellular location is the mitochondrion matrix. It carries out the reaction 2 superoxide + 2 H(+) = H2O2 + O2. Functionally, destroys superoxide anion radicals which are normally produced within the cells and which are toxic to biological systems. This Pan troglodytes (Chimpanzee) protein is Superoxide dismutase [Mn], mitochondrial (SOD2).